A 224-amino-acid polypeptide reads, in one-letter code: dTTP/UTP pyrophosphatase (224 aa).

Asp-77 functions as the Proton acceptor in the catalytic mechanism.

This sequence belongs to the Maf family. YhdE subfamily. A divalent metal cation serves as cofactor.

It localises to the cytoplasm. The enzyme catalyses dTTP + H2O = dTMP + diphosphate + H(+). It catalyses the reaction UTP + H2O = UMP + diphosphate + H(+). In terms of biological role, nucleoside triphosphate pyrophosphatase that hydrolyzes dTTP and UTP. May have a dual role in cell division arrest and in preventing the incorporation of modified nucleotides into cellular nucleic acids. This is dTTP/UTP pyrophosphatase from Dehalococcoides mccartyi (strain CBDB1).